A 118-amino-acid polypeptide reads, in one-letter code: Thioredoxin-like protein CXXS1 (118 aa).

The Thioredoxin domain maps to 2 to 110; it reads ARVVKIDSAE…IKKRVDGFVQ (109 aa).

Belongs to the thioredoxin family. As to expression, ubiquitous.

Its subcellular location is the cytoplasm. Functionally, possesses low disulfide reductase activity, but efficient protein disulfide isomerase activity. Does not possess deglutathionylation activity. This chain is Thioredoxin-like protein CXXS1 (CXXS1), found in Arabidopsis thaliana (Mouse-ear cress).